The primary structure comprises 509 residues: Scavenger receptor class B member 1 (509 aa).

The Cytoplasmic segment spans residues 1 to 11 (MGVSSRARWVA). The chain crosses the membrane as a helical span at residues 12-32 (LGLGVLGLLCAALGVIMILMV). Residues 33-440 (PSLIKQQVLK…YTQLVLMPQV (408 aa)) are Extracellular-facing. N-linked (GlcNAc...) asparagine glycosylation is found at asparagine 102, asparagine 108, asparagine 116, asparagine 173, asparagine 212, asparagine 227, asparagine 255, asparagine 310, asparagine 330, and asparagine 383. A disulfide bridge links cysteine 251 with cysteine 384. Residues 441-461 (LHYAQYVLLGLGGLLLLVPII) traverse the membrane as a helical segment. Over 462-509 (YQLRSQEKCFLFWSGSKKGSQDKEAMQAYSESLMSPAAKGTVLQEAKL) the chain is Cytoplasmic.

Belongs to the CD36 family. In terms of assembly, the C-terminal region binds to PDZK1. N-glycosylated. Post-translationally, the six cysteines of the extracellular domain are all involved in intramolecular disulfide bonds.

The protein resides in the cell membrane. It localises to the membrane. It is found in the caveola. Receptor for different ligands such as phospholipids, cholesterol ester, lipoproteins, phosphatidylserine and apoptotic cells. Receptor for HDL, mediating selective uptake of cholesteryl ether and HDL-dependent cholesterol efflux. Also facilitates the flux of free and esterified cholesterol between the cell surface and apoB-containing lipoproteins and modified lipoproteins, although less efficiently than HDL. May be involved in the phagocytosis of apoptotic cells, via its phosphatidylserine binding activity. In Rattus norvegicus (Rat), this protein is Scavenger receptor class B member 1 (Scarb1).